Reading from the N-terminus, the 545-residue chain is CTP synthase (545 aa).

The amidoligase domain stretch occupies residues 1–266 (MTTNYIFVTG…DDYICKRFSL (266 aa)). Residue serine 14 participates in CTP binding. UTP is bound at residue serine 14. Residues 15–20 (SLGKGI) and aspartate 72 each bind ATP. Aspartate 72 and glutamate 140 together coordinate Mg(2+). CTP-binding positions include 147–149 (DIE), 187–192 (KTKPTQ), and lysine 223. Residues 187 to 192 (KTKPTQ) and lysine 223 each bind UTP. ATP is bound at residue 239 to 241 (KDV). The Glutamine amidotransferase type-1 domain occupies 291–542 (TIGMIGKYVE…VKAAGEYQKR (252 aa)). Glycine 352 contacts L-glutamine. Cysteine 379 (nucleophile; for glutamine hydrolysis) is an active-site residue. L-glutamine is bound by residues 380-383 (LGMQ), glutamate 403, and arginine 470. Active-site residues include histidine 515 and glutamate 517.

It belongs to the CTP synthase family. Homotetramer.

The catalysed reaction is UTP + L-glutamine + ATP + H2O = CTP + L-glutamate + ADP + phosphate + 2 H(+). It carries out the reaction L-glutamine + H2O = L-glutamate + NH4(+). The enzyme catalyses UTP + NH4(+) + ATP = CTP + ADP + phosphate + 2 H(+). Its pathway is pyrimidine metabolism; CTP biosynthesis via de novo pathway; CTP from UDP: step 2/2. Allosterically activated by GTP, when glutamine is the substrate; GTP has no effect on the reaction when ammonia is the substrate. The allosteric effector GTP functions by stabilizing the protein conformation that binds the tetrahedral intermediate(s) formed during glutamine hydrolysis. Inhibited by the product CTP, via allosteric rather than competitive inhibition. Catalyzes the ATP-dependent amination of UTP to CTP with either L-glutamine or ammonia as the source of nitrogen. Regulates intracellular CTP levels through interactions with the four ribonucleotide triphosphates. The polypeptide is CTP synthase (Yersinia enterocolitica serotype O:8 / biotype 1B (strain NCTC 13174 / 8081)).